A 120-amino-acid polypeptide reads, in one-letter code: Ribosome-binding factor A (120 aa).

The protein belongs to the RbfA family. In terms of assembly, monomer. Binds 30S ribosomal subunits, but not 50S ribosomal subunits or 70S ribosomes.

It is found in the cytoplasm. In terms of biological role, one of several proteins that assist in the late maturation steps of the functional core of the 30S ribosomal subunit. Associates with free 30S ribosomal subunits (but not with 30S subunits that are part of 70S ribosomes or polysomes). Required for efficient processing of 16S rRNA. May interact with the 5'-terminal helix region of 16S rRNA. This is Ribosome-binding factor A from Rickettsia peacockii (strain Rustic).